We begin with the raw amino-acid sequence, 530 residues long: TNF receptor-associated factor 6 (530 aa).

The interval 1 to 362 is interaction with TAX1BP1; it reads MSLLNCENSC…EAQQCNGIYI (362 aa). An RING-type; degenerate zinc finger spans residues 70-109; that stretch reads CPICLMALREAVQTPCGHRFCKACITKSIRDAGHKCPVDN. Residue lysine 124 forms a Glycyl lysine isopeptide (Lys-Gly) (interchain with G-Cter in SUMO); alternate linkage. A Glycyl lysine isopeptide (Lys-Gly) (interchain with G-Cter in ubiquitin); alternate cross-link involves residue lysine 124. Residue lysine 142 forms a Glycyl lysine isopeptide (Lys-Gly) (interchain with G-Cter in SUMO) linkage. 2 TRAF-type zinc fingers span residues 150–202 and 203–259; these read DHQV…EEKE and IHDQ…NHLA. Residues 302-356 are a coiled coil; it reads NYEETVKQLEGRLVRQDHQIRELTAKMETQSMHVSELKRTIRSLEDKVAEMEAQQ. Lysine 327 is covalently cross-linked (Glycyl lysine isopeptide (Lys-Gly) (interchain with G-Cter in ubiquitin)). The MATH domain occupies 358-507; that stretch reads NGIYIWKIGN…DDTLLVRCEV (150 aa). The tract at residues 363–530 is interaction with TANK; the sequence is WKIGNFGMHL…FQPRSTDAGV (168 aa). Lysine 461 is covalently cross-linked (Glycyl lysine isopeptide (Lys-Gly) (interchain with G-Cter in SUMO)).

The protein belongs to the TNF receptor-associated factor family. A subfamily. Homotrimer. Homooligomer. N-terminal region is dimeric while C-terminal region is trimeric; maybe providing a mode of oligomerization. Upon IL1B treatment, forms a complex with PELI1, IRAK1, IRAK4 and MYD88; this complex recruits MAP3K7/TAK1, TAB1 and TAB2 to mediate NF-kappa-B activation. Direct binding of SMAD6 to PELI1 prevents the complex formation and hence negatively regulates IL1R-TLR signaling and eventually NF-kappa-B-mediated gene expression. Binds to TNFRSF5/CD40 and TNFRSF11A/RANK. Associates with NGFR, TNFRSF17, IRAK2, IRAK3, RIPK2, MAP3K1, MAP3K5, MAP3K14, CSK, TRAF, TRAF-interacting protein TRIP and TNF receptor associated protein TDP2. Interacts with IL17R. Interacts with SQSTM1 bridging NTRK1 and NGFR. Forms a ternary complex with SQSTM1 and PRKCZ. Interacts with PELI2 and PELI3. Binds UBE2V1. Interacts with TAX1BP1; this interaction mediates deubiquitination of TRAF6 and inhibition of NF-kappa-B activation. Interacts with ZNF675. Interacts with ARRB1 and ARRB2. Interacts with MAP3K7 and TAB1/MAP3K7IP1; during IL-1 signaling. Interacts with UBE2N. Interacts with TGFBR1, HDAC1 and RANGAP1. Interacts with AKT1, AKT2 and AKT3. Interacts (via TRAF domains) with NUMBL (via C-terminal). Interacts with RBCK1. Interacts with LIMD1 (via LIM domains). Interacts with RSAD2/viperin. Interacts (via C-terminus) with EIF2AK2/PKR (via the kinase catalytic domain). Interacts with ZFAND5. Interacts with IL1RL1. Interacts with TRAFD1. Interacts with AJUBA. Interacts with MAVS/IPS1. Interacts (via TRAF domains) with DYNC2I2 (via WD domains). Interacts with IFIT3 (via N-terminus). Interacts with TICAM2. Interacts with CARD14. Interacts with CD40 and MAP3K8; the interaction is required for ERK activation. Interacts with TICAM1 and this interaction is enhanced in the presence of WDFY1. Interacts with TANK; this interaction increases in response to DNA damage. Interacts with USP10; this interaction increases in response to DNA damage. Interacts with ZC3H12A; this interaction increases in response to DNA damage and is stimulated by TANK. Interacts with WDFY3. Interacts with TRIM13. Interacts with GPS2. Interacts (via C-terminus) with SASH1. Interacts with LRRC19. Interacts with IL17RA and TRAF3IP2. Interacts with TOMM70. Interacts with AMBRA1; interaction is required to mediate 'Lys-63'-linked ubiquitination of ULK1. Interacts with CRBN; this interaction inhibits TLR4-mediated signaling by preventing TRAF6-mediated ubiquitination of ECSIT. Post-translationally, sumoylated on Lys-124, Lys-142 and Lys-461 with SUMO1. In terms of processing, polyubiquitinated on Lys-124 by TRAF3IP2; after cell stimulation with IL17A. Polyubiquitinated; after cell stimulation with IL1B or TGFB. This ligand-induced cell stimulation leads to dimerization/oligomerization of TRAF6 molecules, followed by auto-ubiquitination which involves UBE2N and UBE2V1 and leads to TRAF6 activation. This 'Lys-63' site-specific poly-ubiquitination appears to be associated with the activation of signaling molecules. Endogenous autoubiquitination occurs only for the cytoplasmic form. Deubiquitinated by USP10 in a TANK-dependent manner, leading to the negative regulation of NF-kappa-B signaling upon DNA damage. LRRC19 induces 'Lys-63' ubiquitination. Ubiquitinated at Lys-327 by the SCF(FBXL2) complex, leading to its degradation by the proteasome.

It is found in the cytoplasm. The protein localises to the cell cortex. The protein resides in the nucleus. Its subcellular location is the lipid droplet. The enzyme catalyses S-ubiquitinyl-[E2 ubiquitin-conjugating enzyme]-L-cysteine + [acceptor protein]-L-lysine = [E2 ubiquitin-conjugating enzyme]-L-cysteine + N(6)-ubiquitinyl-[acceptor protein]-L-lysine.. Its pathway is protein modification; protein ubiquitination. In terms of biological role, E3 ubiquitin ligase that, together with UBE2N and UBE2V1, mediates the synthesis of 'Lys-63'-linked-polyubiquitin chains conjugated to proteins, such as ECSIT, IKBKG, IRAK1, AKT1 and AKT2. Also mediates ubiquitination of free/unanchored polyubiquitin chain that leads to MAP3K7 activation. Leads to the activation of NF-kappa-B and JUN. Seems to also play a role in dendritic cells (DCs) maturation and/or activation. Represses c-Myb-mediated transactivation, in B-lymphocytes. Adapter protein that seems to play a role in signal transduction initiated via TNF receptor, IL-1 receptor and IL-17 receptor. Regulates osteoclast differentiation by mediating the activation of adapter protein complex 1 (AP-1) and NF-kappa-B, in response to RANK-L stimulation. Together with MAP3K8, mediates CD40 signals that activate ERK in B-cells and macrophages, and thus may play a role in the regulation of immunoglobulin production. Acts as a regulator of the JNK and NF-kappa-B signaling pathways by initiating assembly of heterotypic 'Lys-63'-/'Lys-48'-linked branched ubiquitin chains that are then recognized by TAB2: TRAF6 catalyzes initial 'Lys-63'-linked-polyubiquitin chains that are then branched via 'Lys-48'-linked polyubiquitin by HUWE1. 'Lys-63'-/'Lys-48'-linked branched ubiquitin chains protect 'Lys-63'-linkages from CYLD deubiquitination. Also participates in the TCR signaling by ubiquitinating LAT. The protein is TNF receptor-associated factor 6 (Traf6) of Rattus norvegicus (Rat).